A 582-amino-acid polypeptide reads, in one-letter code: External alternative NAD(P)H-ubiquinone oxidoreductase B4, mitochondrial (582 aa).

Residues 1–39 (MSFHSFYQRASSLFKAYPSTSKILLLSTFSGGGGVLVYS) constitute a mitochondrion transit peptide. 65–95 (KVVVLGSGWSGYSFLSYLNNPNYDVQVVSPR) contributes to the FAD binding site. 227-263 (LHFVVVGGGPTGVEFSAELHDFLVQDVAKIYPKVQEF) provides a ligand contact to NAD(+). Positions 384–419 (RVMEDIAAIFNKADKGNTGTLKKKDFNSVVKDICQR) constitute an EF-hand domain. Ca(2+) contacts are provided by Asp397, Thr401, Thr403, and Asp408. Residues 573 to 582 (FVFGRDSSSI) carry the Microbody targeting signal motif.

The protein belongs to the NADH dehydrogenase family. FAD serves as cofactor. Expressed in seedlings, roots, cotyledons, stems, buds and flowers and, to a lower extent, in stems and leaves.

The protein localises to the mitochondrion inner membrane. The protein resides in the peroxisome. It catalyses the reaction a quinone + NADH + H(+) = a quinol + NAD(+). The catalysed reaction is a ubiquinone + NADH + H(+) = a ubiquinol + NAD(+). No effect of calcium ions on activity. In terms of biological role, alternative NADH-ubiquinone oxidoreductase which catalyzes the oxidation of mitochondrial NADH does not translocate protons across the inner mitochondrial membrane. NAD(P)H dehydrogenase; more efficient on NADH. This is External alternative NAD(P)H-ubiquinone oxidoreductase B4, mitochondrial (NDB4) from Arabidopsis thaliana (Mouse-ear cress).